Here is a 285-residue protein sequence, read N- to C-terminus: Undecaprenyl-diphosphatase (285 aa).

A run of 7 helical transmembrane segments spans residues 12-34 (IVIAILQGATELFPVSSLGHAVI), 49-69 (IFLPFLVMLHLGTAIALLVYF), 93-113 (IHILALLVVATIPAVIIGGLL), 120-140 (LFGTARYAAIFLFLNGLLLLL), 159-179 (LTYADAAIIGLWQCLAFLPGI), 234-254 (VATIGAMVAAVTALASTAFLM), and 263-283 (WALSPFGYYCVLAGAVSFFIL).

This sequence belongs to the UppP family.

It is found in the cell inner membrane. It catalyses the reaction di-trans,octa-cis-undecaprenyl diphosphate + H2O = di-trans,octa-cis-undecaprenyl phosphate + phosphate + H(+). Functionally, catalyzes the dephosphorylation of undecaprenyl diphosphate (UPP). Confers resistance to bacitracin. This chain is Undecaprenyl-diphosphatase, found in Gluconacetobacter diazotrophicus (strain ATCC 49037 / DSM 5601 / CCUG 37298 / CIP 103539 / LMG 7603 / PAl5).